The primary structure comprises 348 residues: GTP 3',8-cyclase (348 aa).

The Radical SAM core domain maps to 24–242 (PFGRAVTYLR…EKQFTLTDID (219 aa)). Arginine 33 serves as a coordination point for GTP. Cysteine 40 and cysteine 44 together coordinate [4Fe-4S] cluster. Tyrosine 46 is a binding site for S-adenosyl-L-methionine. Cysteine 47 contributes to the [4Fe-4S] cluster binding site. Residue arginine 82 participates in GTP binding. Glycine 86 is an S-adenosyl-L-methionine binding site. Threonine 115 provides a ligand contact to GTP. S-adenosyl-L-methionine is bound at residue serine 139. A GTP-binding site is contributed by lysine 175. An S-adenosyl-L-methionine-binding site is contributed by methionine 209. Cysteine 272 and cysteine 275 together coordinate [4Fe-4S] cluster. 277–279 (RVR) is a GTP binding site. A [4Fe-4S] cluster-binding site is contributed by cysteine 289.

The protein belongs to the radical SAM superfamily. MoaA family. As to quaternary structure, monomer and homodimer. Requires [4Fe-4S] cluster as cofactor.

It catalyses the reaction GTP + AH2 + S-adenosyl-L-methionine = (8S)-3',8-cyclo-7,8-dihydroguanosine 5'-triphosphate + 5'-deoxyadenosine + L-methionine + A + H(+). It functions in the pathway cofactor biosynthesis; molybdopterin biosynthesis. Its function is as follows. Catalyzes the cyclization of GTP to (8S)-3',8-cyclo-7,8-dihydroguanosine 5'-triphosphate. This is GTP 3',8-cyclase from Rhizobium leguminosarum bv. trifolii (strain WSM2304).